Here is a 29-residue protein sequence, read N- to C-terminus: Toxin TdII-3 (29 aa).

Residues 1 to 29 form the LCN-type CS-alpha/beta domain; it reads KDGYLVGTDGCKYGCFTRPGHFCANEECL.

The protein belongs to the long (4 C-C) scorpion toxin superfamily. Sodium channel inhibitor family. Beta subfamily. In terms of tissue distribution, expressed by the venom gland.

The protein localises to the secreted. In terms of biological role, binds voltage-independently to sodium channels (Nav) and shifts the voltage of activation toward more negative potentials. This toxin is active against mammals and also affects neuromuscular preparations of frog. The protein is Toxin TdII-3 of Tityus discrepans (Venezuelan scorpion).